The sequence spans 278 residues: Bifunctional protein FolD (278 aa).

Residues 165–167 (GRS), S190, and T231 contribute to the NADP(+) site.

Belongs to the tetrahydrofolate dehydrogenase/cyclohydrolase family. As to quaternary structure, homodimer.

The enzyme catalyses (6R)-5,10-methylene-5,6,7,8-tetrahydrofolate + NADP(+) = (6R)-5,10-methenyltetrahydrofolate + NADPH. The catalysed reaction is (6R)-5,10-methenyltetrahydrofolate + H2O = (6R)-10-formyltetrahydrofolate + H(+). It functions in the pathway one-carbon metabolism; tetrahydrofolate interconversion. In terms of biological role, catalyzes the oxidation of 5,10-methylenetetrahydrofolate to 5,10-methenyltetrahydrofolate and then the hydrolysis of 5,10-methenyltetrahydrofolate to 10-formyltetrahydrofolate. The sequence is that of Bifunctional protein FolD from Clostridium novyi (strain NT).